The primary structure comprises 166 residues: Interferon gamma (166 aa).

Positions 1–23 are cleaved as a signal peptide; it reads MKYTSYILALQLCVLLGFSGSYG. Gln24 is subject to Pyrrolidone carboxylic acid. Residues Asn39 and Asn106 are each glycosylated (N-linked (GlcNAc...) asparagine).

The protein belongs to the type II (or gamma) interferon family. As to quaternary structure, homodimer. Interacts with IFNGR1 (via extracellular domain); this interaction promotes IFNGR1 dimerization. As to expression, released primarily from activated T lymphocytes.

The protein localises to the secreted. Its function is as follows. Type II interferon produced by immune cells such as T-cells and NK cells that plays crucial roles in antimicrobial, antiviral, and antitumor responses by activating effector immune cells and enhancing antigen presentation. Primarily signals through the JAK-STAT pathway after interaction with its receptor IFNGR1 to affect gene regulation. Upon IFNG binding, IFNGR1 intracellular domain opens out to allow association of downstream signaling components JAK2, JAK1 and STAT1, leading to STAT1 activation, nuclear translocation and transcription of IFNG-regulated genes. Many of the induced genes are transcription factors such as IRF1 that are able to further drive regulation of a next wave of transcription. Plays a role in class I antigen presentation pathway by inducing a replacement of catalytic proteasome subunits with immunoproteasome subunits. In turn, increases the quantity, quality, and repertoire of peptides for class I MHC loading. Increases the efficiency of peptide generation also by inducing the expression of activator PA28 that associates with the proteasome and alters its proteolytic cleavage preference. Up-regulates as well MHC II complexes on the cell surface by promoting expression of several key molecules such as cathepsins B/CTSB, H/CTSH, and L/CTSL. Participates in the regulation of hematopoietic stem cells during development and under homeostatic conditions by affecting their development, quiescence, and differentiation. This is Interferon gamma (IFNG) from Cervus elaphus (Red deer).